A 380-amino-acid polypeptide reads, in one-letter code: Alkanesulfonate monooxygenase (380 aa).

It belongs to the SsuD family. In terms of assembly, homotetramer.

The enzyme catalyses an alkanesulfonate + FMNH2 + O2 = an aldehyde + FMN + sulfite + H2O + 2 H(+). Functionally, catalyzes the desulfonation of aliphatic sulfonates. In Pectobacterium atrosepticum (strain SCRI 1043 / ATCC BAA-672) (Erwinia carotovora subsp. atroseptica), this protein is Alkanesulfonate monooxygenase.